The chain runs to 1862 residues: Chitin synthase V (1862 aa).

Residues 1-26 are disordered; that stretch reads MAMSLPQLGGAGGPHTQPSLPSLPAH. The 778-residue stretch at 1 to 778 folds into the Myosin motor domain; the sequence is MAMSLPQLGG…CWMEIAQLGE (778 aa). N-linked (GlcNAc...) asparagine glycosylation is present at N63. Residue 104–111 participates in ATP binding; that stretch reads GESGAGKS. 5 N-linked (GlcNAc...) asparagine glycosylation sites follow: N123, N429, N483, N522, and N560. Residues 592 to 643 are disordered; sequence TVSSKPMRAPSVMSRKTHRTGRPSTAYKRQQQEAMEELDQQSQAGESKKNAK. Residues 658 to 682 are actin-binding; it reads LDNVQKAVTDPGTNSYFVFCLKPND. The next 2 helical transmembrane spans lie at 884 to 904 and 923 to 943; these read WVAL…RLIG and MLIW…PMLI. The Cytochrome b5 heme-binding domain occupies 947–1009; it reads QYVYSSNELS…YAGKDISALF (63 aa). N-linked (GlcNAc...) asparagine glycosylation is found at N1036, N1063, and N1192. A helical transmembrane segment spans residues 1202 to 1222; the sequence is FILAISVMLASILVFKFLAAL. N-linked (GlcNAc...) asparagine glycosylation is found at N1459 and N1565. The next 3 helical transmembrane spans lie at 1590-1610, 1623-1643, and 1650-1670; these read FVVF…MYIV, VPIT…VIFI, and MVGW…GLPL. N1771 carries N-linked (GlcNAc...) asparagine glycosylation. The 56-residue stretch at 1804–1859 folds into the DEK-C domain; sequence MPSDDALLAEIRDILKTADLMTVTKKGIKQELERRFNVPLDAKRAYINSATEALLS.

The protein in the N-terminal section; belongs to the TRAFAC class myosin-kinesin ATPase superfamily. Myosin family. It in the C-terminal section; belongs to the chitin synthase family. Class V subfamily.

The protein localises to the cell membrane. It catalyses the reaction [(1-&gt;4)-N-acetyl-beta-D-glucosaminyl](n) + UDP-N-acetyl-alpha-D-glucosamine = [(1-&gt;4)-N-acetyl-beta-D-glucosaminyl](n+1) + UDP + H(+). Functionally, polymerizes chitin, a structural polymer of the cell wall and septum, by transferring the sugar moiety of UDP-GlcNAc to the non-reducing end of the growing chitin polymer. ChsV and chsVb do perform additive, but not redundant, functions in septum formation. Involved in cell wall integrity and resistance to antimicrobial plant defense compounds such as the tomato phytoanticipin alpha-tomatine or H(2)O(2), and plays a crucial role in vascular colonization and pathogenicity. Also plays an important role in nuclear sorting or distribution. The protein is Chitin synthase V of Fusarium oxysporum f. sp. lycopersici (strain 4287 / CBS 123668 / FGSC 9935 / NRRL 34936) (Fusarium vascular wilt of tomato).